We begin with the raw amino-acid sequence, 424 residues long: Dehydrogenase FUM7 (424 aa).

The protein belongs to the iron-containing alcohol dehydrogenase family. The cofactor is Fe cation.

It participates in mycotoxin biosynthesis. In terms of biological role, dehydrogenase; part of the gene cluster that mediates the biosynthesis of fumonisins B1 (FB1), B2 (FB2), B3 (FB3), and B4 (FB4), which are carcinogenic mycotoxins. Within the pathway, FUM7 is involved the addition of the tricarballylic moieties to the carbon backbone. FUM7 dehydrogenase removes the C-3 hydroxyl of citrate to form tricarballylic acid either before or after the CoA activation by the FUM10 acyl-CoA synthetase and FUM14 catalyzed esterification of CoA-activated tricarballylic acid to the C-14 and C-15 hydroxyls of the fumonisin backbone. The biosynthesis starts with the FUM1-catalyzed carbon chain assembly from one molecule of acetyl-CoA, eight molecules of malonyl-CoA, and two molecules of methionine (in S-adenosyl form). The C18 polyketide chain is released from the enzyme by a nucleophilic attack of a carbanion, which is derived from R-carbon of alanine by decarboxylation, on the carbonyl carbon of polyketide acyl chain. This step is catalyzed by the pyridoxal 5'-phosphate-dependent aminoacyl transferase FUM8. The resultant 3-keto intermediate is then stereospecifically reduced to a 3-hydroxyl product by reductase FUM13. Subsequent oxidations at C-10 by the cytochrome P450 monooxygenase FUM2, C-14 and C-15 by FUM6, FUM12 or FUM15, tricarballylic esterification of the hydroxyl groups on C-14 and C-15 by acyltransferase FUM14, and C-5 hydroxylation by 2-keto-glutarate-dependent dioxygenase FUM3 furnish the biosynthesis of fumonisins. The tricarballylic moieties are most likely derived from the citric acid cycle, and their addition to the carbon backbone may involve FUM7, FUM10, FUM11 and FUM14. In Gibberella moniliformis (strain M3125 / FGSC 7600) (Maize ear and stalk rot fungus), this protein is Dehydrogenase FUM7.